A 484-amino-acid chain; its full sequence is BPI fold-containing family B member 1 (484 aa).

Positions 1-21 (MAGPWTFTLLCGLLAATLIQA) are cleaved as a signal peptide. N48 carries N-linked (GlcNAc...) asparagine glycosylation. The cysteines at positions 158 and 201 are disulfide-linked. 2 N-linked (GlcNAc...) asparagine glycosylation sites follow: N264 and N401.

It belongs to the BPI/LBP/Plunc superfamily. Plunc family. As to expression, detected in duodenum mucosal crypts of cholera patients, near Paneth cells (at protein level). Detected in trachea, nasal septal epithelium and lung.

It localises to the secreted. Its function is as follows. May play a role in innate immunity in mouth, nose and lungs. Binds bacterial lipopolysaccharide (LPS) and modulates the cellular responses to LPS. This chain is BPI fold-containing family B member 1 (BPIFB1), found in Homo sapiens (Human).